The sequence spans 476 residues: Protein transport protein Sec61 subunit alpha isoform 2 (476 aa).

The Cytoplasmic segment spans residues 1–33; the sequence is MGIKFLEVIKPFCAVLPEIQKPERKIQFREKVL. Residues 34–53 form a helical membrane-spanning segment; sequence WTAITLFIFLVCCQIPLFGI. Over 54–76 the chain is Lumenal; sequence MSSDSADPFYWMRVILASNRGTL. Residues 77 to 96 form a helical membrane-spanning segment; the sequence is MELGISPIVTSGLIMQLLAG. Residues 97–117 are Cytoplasmic-facing; it reads AKIIEVGDTPKDRALFNGAQK. A helical transmembrane segment spans residues 118-138; the sequence is LFGMIITIGQAIVYVMTGMYG. Residues 139–144 lie on the Lumenal side of the membrane; that stretch reads DPAEMG. The chain crosses the membrane as a helical span at residues 145-165; that stretch reads AGICLLIIIQLFVAGLIVLLL. The Cytoplasmic portion of the chain corresponds to 166 to 172; sequence DELLQKG. The helical transmembrane segment at 173-193 threads the bilayer; sequence YGLGSGISLFIATNICETIVW. Topologically, residues 194-240 are lumenal; that stretch reads KAFSPTTINTGRGTEFEGAVIALFHLLATRTDKVRALREAFYRQNLP. The helical transmembrane segment at 241 to 261 threads the bilayer; the sequence is NLMNLIATVFVFAVVIYFQGF. At 262–288 the chain is on the cytoplasmic side; that stretch reads RVDLPIKSARYRGQYSSYPIKLFYTSN. The helical transmembrane segment at 289–309 threads the bilayer; that stretch reads IPIILQSALVSNLYVISQMLS. The Lumenal portion of the chain corresponds to 310 to 354; that stretch reads VRFSGNFLVNLLGQWADVSGGGPARSYPVGGLCYYLSPPESMGAI. A helical membrane pass occupies residues 355–375; sequence FEDPVHVVVYIIFMLGSCAFF. The Cytoplasmic segment spans residues 376–420; the sequence is SKTWIEVSGSSAKDVAKQLKEQQMVMRGHRDTSMVHELNRYIPTA. A helical membrane pass occupies residues 421–441; that stretch reads AAFGGLCIGALSVLADFLGAI. At 442-445 the chain is on the lumenal side; it reads GSGT. The helical transmembrane segment at 446–462 threads the bilayer; that stretch reads GILLAVTIIYQYFEIFV. The Cytoplasmic segment spans residues 463 to 476; it reads KEQAEVGGMGALFF.

The protein belongs to the SecY/SEC61-alpha family. The SEC61 channel-forming translocon complex consists of channel-forming core components SEC61A1, SEC61B and SEC61G and different auxiliary components such as SEC62 and SEC63.

The protein localises to the endoplasmic reticulum membrane. Its function is as follows. Component of SEC61 channel-forming translocon complex that mediates transport of signal peptide-containing precursor polypeptides across the endoplasmic reticulum (ER). Forms a ribosome receptor and a gated pore in the ER membrane, both functions required for cotranslational translocation of nascent polypeptides. This chain is Protein transport protein Sec61 subunit alpha isoform 2 (SEC61A2), found in Homo sapiens (Human).